Here is a 181-residue protein sequence, read N- to C-terminus: MKLLFDFFPIVLFFIVYKFFGIYTATAVAMVASLTQVAFYRLKFQHYEKMHLFSLAIIMVLGGATLFFQNPWFIKWKPTGIYWLSALVFYGSSYIGSKPLIQKMMEANINLTTKIWYRLNLAWTLFFIVMGALNLYVAYHYDTDVWVNFKLFGGVGFTLLFVLIQAFYLTKHTDEKSFEKQ.

5 helical membrane-spanning segments follow: residues 3–23 (LLFDFFPIVLFFIVYKFFGIY), 54–74 (SLAIIMVLGGATLFFQNPWFI), 81–101 (IYWLSALVFYGSSYIGSKPLI), 119–139 (LNLAWTLFFIVMGALNLYVAY), and 149–169 (FKLFGGVGFTLLFVLIQAFYL).

It belongs to the YciB family.

The protein resides in the cell inner membrane. Its function is as follows. Plays a role in cell envelope biogenesis, maintenance of cell envelope integrity and membrane homeostasis. The sequence is that of Inner membrane-spanning protein YciB from Legionella pneumophila subsp. pneumophila (strain Philadelphia 1 / ATCC 33152 / DSM 7513).